A 71-amino-acid chain; its full sequence is Protein CYSTEINE-RICH TRANSMEMBRANE MODULE 3 (71 aa).

The segment at V30–G49 is disordered. A helical membrane pass occupies residues K48 to C64.

It belongs to the CYSTM1 family. In terms of assembly, heterodimers. Interacts with CYSTM7 and WIH1/CYSTM13. As to expression, mostly expressed in leaves and flowers and, to a lower extent, in stems, siliques, shoots and roots.

It localises to the cell membrane. The protein resides in the cytoplasm. It is found in the mitochondrion. Its function is as follows. Negatively regulates salt stress responses and Na(+) homeostasis. Prevents Na(+) efflux, disturbs reactive oxygen species (ROS) homeostasis, and represses the expression of nuclear salt stress-responsive genes. Involved in resistance to abiotic stress. This chain is Protein CYSTEINE-RICH TRANSMEMBRANE MODULE 3, found in Arabidopsis thaliana (Mouse-ear cress).